The following is a 52-amino-acid chain: Superoxide dismutase [Cu-Zn] 2 (52 aa).

Position 44 (His44) interacts with Cu cation.

It belongs to the Cu-Zn superoxide dismutase family. As to quaternary structure, homodimer. It depends on Cu cation as a cofactor. The cofactor is Zn(2+).

The protein localises to the cytoplasm. It carries out the reaction 2 superoxide + 2 H(+) = H2O2 + O2. In terms of biological role, destroys radicals which are normally produced within the cells and which are toxic to biological systems. The sequence is that of Superoxide dismutase [Cu-Zn] 2 from Debaryomyces hansenii (Yeast).